The primary structure comprises 235 residues: Ribosomal RNA large subunit methyltransferase E (235 aa).

Positions 76, 78, 99, 115, and 139 each coordinate S-adenosyl-L-methionine. Lysine 179 functions as the Proton acceptor in the catalytic mechanism.

The protein belongs to the class I-like SAM-binding methyltransferase superfamily. RNA methyltransferase RlmE family.

It is found in the cytoplasm. It catalyses the reaction uridine(2552) in 23S rRNA + S-adenosyl-L-methionine = 2'-O-methyluridine(2552) in 23S rRNA + S-adenosyl-L-homocysteine + H(+). In terms of biological role, specifically methylates the uridine in position 2552 of 23S rRNA at the 2'-O position of the ribose in the fully assembled 50S ribosomal subunit. The polypeptide is Ribosomal RNA large subunit methyltransferase E (Rhodopseudomonas palustris (strain BisA53)).